Reading from the N-terminus, the 518-residue chain is Glutamate--cysteine ligase (518 aa).

The protein belongs to the glutamate--cysteine ligase type 1 family. Type 1 subfamily.

It catalyses the reaction L-cysteine + L-glutamate + ATP = gamma-L-glutamyl-L-cysteine + ADP + phosphate + H(+). The protein operates within sulfur metabolism; glutathione biosynthesis; glutathione from L-cysteine and L-glutamate: step 1/2. This is Glutamate--cysteine ligase (gshA) from Buchnera aphidicola subsp. Acyrthosiphon pisum (strain APS) (Acyrthosiphon pisum symbiotic bacterium).